The primary structure comprises 308 residues: Protease HtpX homolog (308 aa).

2 helical membrane passes run 16–36 (LLSLLVGLGIAALASLIIYAV) and 39–59 (YLFGIYSIGIIFGVFVLVLMM). Zn(2+) is bound at residue H149. E150 is an active-site residue. Residue H153 coordinates Zn(2+). 2 helical membrane passes run 161–181 (VIMAIGLIPTLIFYFAYTTLF) and 192–212 (IILALVLMVVSFLFNIMVLSV). A Zn(2+)-binding site is contributed by E217.

The protein belongs to the peptidase M48B family. Requires Zn(2+) as cofactor.

The protein localises to the cell membrane. The sequence is that of Protease HtpX homolog from Thermoplasma volcanium (strain ATCC 51530 / DSM 4299 / JCM 9571 / NBRC 15438 / GSS1).